Consider the following 418-residue polypeptide: Glutamyl-tRNA reductase (418 aa).

Substrate contacts are provided by residues 49 to 52, S107, 112 to 114, and Q118; these read TCNR and EPQ. The Nucleophile role is filled by C50. 187 to 192 serves as a coordination point for NADP(+); that stretch reads GAGETI.

It belongs to the glutamyl-tRNA reductase family. Homodimer.

It catalyses the reaction (S)-4-amino-5-oxopentanoate + tRNA(Glu) + NADP(+) = L-glutamyl-tRNA(Glu) + NADPH + H(+). The protein operates within porphyrin-containing compound metabolism; protoporphyrin-IX biosynthesis; 5-aminolevulinate from L-glutamyl-tRNA(Glu): step 1/2. Its function is as follows. Catalyzes the NADPH-dependent reduction of glutamyl-tRNA(Glu) to glutamate 1-semialdehyde (GSA). This chain is Glutamyl-tRNA reductase, found in Vibrio campbellii (strain ATCC BAA-1116).